The sequence spans 185 residues: Ribosome-recycling factor (185 aa).

This sequence belongs to the RRF family.

Its subcellular location is the cytoplasm. Responsible for the release of ribosomes from messenger RNA at the termination of protein biosynthesis. May increase the efficiency of translation by recycling ribosomes from one round of translation to another. In Vibrio campbellii (strain ATCC BAA-1116), this protein is Ribosome-recycling factor.